The sequence spans 999 residues: Sarcoplasmic/endoplasmic reticulum calcium ATPase 3 (999 aa).

At Met1 the chain carries N-acetylmethionine. At 1 to 48 the chain is on the cytoplasmic side; sequence MEEAHLLSAADVLRRFSVTAEGGLTLEQVTDARERYGPNELPTEEGKS. Phosphoserine is present on Ser17. The residue at position 19 (Thr19) is a Phosphothreonine. Residues 49-69 traverse the membrane as a helical segment; that stretch reads LWELVVEQFEDLLVRILLLAA. At 70 to 89 the chain is on the lumenal side; that stretch reads LVSFVLAWFEEGEETTTAFV. Residues 90–110 form a helical membrane-spanning segment; sequence EPLVIMLILVANAIVGVWQER. Over 111–253 the chain is Cytoplasmic; the sequence is NAESAIEALK…PERTPLQRKL (143 aa). The chain crosses the membrane as a helical span at residues 254-273; the sequence is DEFGRQLSHAISVICVAVWV. The Lumenal segment spans residues 274-295; sequence INIGHFADPAHGGSWLRGAVYY. A helical membrane pass occupies residues 296-313; it reads FKIAVALAVAAIPEGLPA. The Ca(2+) site is built by Val304, Ala305, Ile307, and Glu309. At 314–757 the chain is on the cytoplasmic side; that stretch reads VITTCLALGT…EEGRAIYNNM (444 aa). Residue Asp351 is the 4-aspartylphosphate intermediate of the active site. Mg(2+) contacts are provided by Asp351 and Thr353. ATP is bound at residue Thr353. The segment at 370 to 400 is interaction with phospholamban 1; that stretch reads AEAEAGACRLHEFTISGTTYTPEGEVRQGEQ. Thr415 carries the phosphothreonine modification. 7 residues coordinate ATP: Glu442, Arg489, Lys515, Arg560, Thr625, Gly626, and Asp627. Ser662 is modified (phosphoserine). Positions 678 and 684 each coordinate ATP. Asp703 serves as a coordination point for Mg(2+). Residue Asn706 coordinates ATP. The chain crosses the membrane as a helical span at residues 758-777; it reads KQFIRYLISSNVGEVVCIFL. Ca(2+) contacts are provided by Asn768 and Glu771. Residues 778–787 are Lumenal-facing; that stretch reads TAILGLPEAL. Residues 788–808 form a helical membrane-spanning segment; sequence IPVQLLWVNLVTDGLPATALG. Residues 788–808 form an interaction with phospholamban 2 region; that stretch reads IPVQLLWVNLVTDGLPATALG. Ca(2+)-binding residues include Asn796, Thr799, and Asp800. At 809 to 828 the chain is on the cytoplasmic side; it reads FNPPDLDIMEKLPRNPREAL. Residues 829-851 form a helical membrane-spanning segment; sequence ISGWLFFRYLAIGVYVGLATVAA. Residues 852–897 lie on the Lumenal side of the membrane; the sequence is ATWWFLYDAEGPQVTFHQLRNFLKCSEDNPLFAGIDCEVFESRFPT. Residues 898–917 form a helical membrane-spanning segment; sequence TMALSVLVTIEMCNALNSVS. Glu908 serves as a coordination point for Ca(2+). Residues 918-930 are Cytoplasmic-facing; it reads ENQSLLRMPPWLN. Residues 931 to 949 traverse the membrane as a helical segment; sequence PWLLGAVVMSMALHFLILL. Over 950–964 the chain is Lumenal; the sequence is VPPLPLIFQVTPLSG. Residues 965 to 985 traverse the membrane as a helical segment; that stretch reads RQWGVVLQMSLPVILLDEALK. Residues 986-999 are Cytoplasmic-facing; that stretch reads YLSRHHVDEKKDLK.

It belongs to the cation transport ATPase (P-type) (TC 3.A.3) family. Type IIA subfamily. In terms of assembly, interacts with sarcolipin (SLN). Interacts with phospholamban (PLN). Interacts with myoregulin (MRLN). Interacts with DWORF. Interacts with VMP1. Interacts with TUNAR; the interaction occurs at low levels in low glucose conditions and is increased by high glucose levels. Mg(2+) is required as a cofactor. Found in most tissues. Most abundant in large and small intestine, spleen and lung. Also detected in PC12 cells.

The protein localises to the endoplasmic reticulum membrane. It localises to the sarcoplasmic reticulum membrane. It catalyses the reaction Ca(2+)(in) + ATP + H2O = Ca(2+)(out) + ADP + phosphate + H(+). Its activity is regulated as follows. Inhibited by sarcolipin (SLN), phospholamban (PLN) and myoregulin (MRLN). Enhanced by DWORF; DWORF increases activity by displacing sarcolipin (SLN), phospholamban (PLN) and myoregulin (MRLN). In terms of biological role, this magnesium-dependent enzyme catalyzes the hydrolysis of ATP coupled with the transport of the calcium. Transports calcium ions from the cytosol into the sarcoplasmic/endoplasmic reticulum lumen. Contributes to calcium sequestration involved in muscular excitation/contraction. Its function is as follows. This magnesium-dependent enzyme catalyzes the hydrolysis of ATP coupled with the transport of calcium. Transports calcium ions from the cytosol into the sarcoplasmic/endoplasmic reticulum lumen. Contributes to calcium sequestration involved in muscular excitation/contraction. This is Sarcoplasmic/endoplasmic reticulum calcium ATPase 3 (Atp2a3) from Rattus norvegicus (Rat).